The following is a 1368-amino-acid chain: DNA-directed RNA polymerase subunit beta (1368 aa).

It belongs to the RNA polymerase beta chain family. In terms of assembly, the RNAP catalytic core consists of 2 alpha, 1 beta, 1 beta' and 1 omega subunit. When a sigma factor is associated with the core the holoenzyme is formed, which can initiate transcription.

The enzyme catalyses RNA(n) + a ribonucleoside 5'-triphosphate = RNA(n+1) + diphosphate. Its function is as follows. DNA-dependent RNA polymerase catalyzes the transcription of DNA into RNA using the four ribonucleoside triphosphates as substrates. The chain is DNA-directed RNA polymerase subunit beta from Legionella pneumophila (strain Lens).